A 146-amino-acid chain; its full sequence is Cyanate hydratase (146 aa).

Residues Arg87, Glu90, and Ser113 contribute to the active site.

The protein belongs to the cyanase family.

It carries out the reaction cyanate + hydrogencarbonate + 3 H(+) = NH4(+) + 2 CO2. Its function is as follows. Catalyzes the reaction of cyanate with bicarbonate to produce ammonia and carbon dioxide. This Marinomonas sp. (strain MWYL1) protein is Cyanate hydratase.